A 326-amino-acid polypeptide reads, in one-letter code: Vacuolar protein sorting-associated protein 26A-A (326 aa).

A disordered region spans residues 306 to 326 (TNFHQRFEPQEPQASAEEPEI). Residues 315–326 (QEPQASAEEPEI) show a composition bias toward low complexity.

This sequence belongs to the VPS26 family. In terms of assembly, component of the heterotrimeric retromer cargo-selective complex (CSC) which is believed to associate with variable sorting nexins to form functionally distinct retromer complex variants.

Its subcellular location is the cytoplasm. The protein resides in the endosome membrane. The protein localises to the early endosome. Acts as a component of the retromer cargo-selective complex (CSC). The CSC is believed to be the core functional component of retromer or respective retromer complex variants acting to prevent missorting of selected transmembrane cargo proteins into the lysosomal degradation pathway. Retromer mediates retrograde transport of cargo proteins from endosomes to the trans-Golgi network (TGN). This Xenopus laevis (African clawed frog) protein is Vacuolar protein sorting-associated protein 26A-A (vps26a-a).